Reading from the N-terminus, the 218-residue chain is Small ribosomal subunit protein uS3c (218 aa).

A KH type-2 domain is found at 47–118 (VQKNMRTSSG…KLNIAVTRIA (72 aa)).

It belongs to the universal ribosomal protein uS3 family. Part of the 30S ribosomal subunit.

Its subcellular location is the plastid. The protein localises to the chloroplast. The protein is Small ribosomal subunit protein uS3c (rps3) of Solanum lycopersicum (Tomato).